The following is a 235-amino-acid chain: MSEERPPLRIVISDPRAGDRVVRVKVKGVEDIEYTDDMRKTKESDRRRLPIARVSRKLYEELNLGEVGVLTLRFTTPDGKKVKVPFKAEVKEGLEDNVVEVNMELLGEAAGELETEADAFRAKSWQIAVPDDVHVKLAGLEIGDVFDGGLIGMPGLKFKIRGGTDATGIPMHPGVPGSGRYKVLLAGPPGFHPRERGERRRKSVRGRMIPDPRGERRKTALAQLNIVIHYGDKEE.

The interval 190 to 212 (GFHPRERGERRRKSVRGRMIPDP) is disordered.

This sequence belongs to the eukaryotic ribosomal protein eS6 family.

This Aeropyrum pernix (strain ATCC 700893 / DSM 11879 / JCM 9820 / NBRC 100138 / K1) protein is Small ribosomal subunit protein eS6.